The following is a 166-amino-acid chain: Large ribosomal subunit protein uL10 (166 aa).

It belongs to the universal ribosomal protein uL10 family. Part of the ribosomal stalk of the 50S ribosomal subunit. The N-terminus interacts with L11 and the large rRNA to form the base of the stalk. The C-terminus forms an elongated spine to which L12 dimers bind in a sequential fashion forming a multimeric L10(L12)X complex.

Functionally, forms part of the ribosomal stalk, playing a central role in the interaction of the ribosome with GTP-bound translation factors. The polypeptide is Large ribosomal subunit protein uL10 (Stutzerimonas stutzeri (strain A1501) (Pseudomonas stutzeri)).